Here is a 537-residue protein sequence, read N- to C-terminus: Glutamyl-tRNA(Gln) amidotransferase subunit A, chloroplastic/mitochondrial (537 aa).

Catalysis depends on charge relay system residues lysine 116 and serine 191. Serine 215 serves as the catalytic Acyl-ester intermediate.

It belongs to the amidase family. GatA subfamily. In terms of assembly, subunit of the heterotrimeric GatCAB amidotransferase (AdT) complex, composed of A, B and C subunits.

Its subcellular location is the mitochondrion. The protein resides in the plastid. It is found in the chloroplast stroma. It carries out the reaction L-glutamyl-tRNA(Gln) + L-glutamine + ATP + H2O = L-glutaminyl-tRNA(Gln) + L-glutamate + ADP + phosphate + H(+). Allows the formation of correctly charged Gln-tRNA(Gln) through the transamidation of misacylated Glu-tRNA(Gln) in chloroplasts and mitochondria. The reaction takes place in the presence of glutamine and ATP through an activated gamma-phospho-Glu-tRNA(Gln). The protein is Glutamyl-tRNA(Gln) amidotransferase subunit A, chloroplastic/mitochondrial of Arabidopsis thaliana (Mouse-ear cress).